A 148-amino-acid chain; its full sequence is Snaclec 8 (148 aa).

The signal sequence occupies residues 1–23 (MGRFIFVSFSLLVVFFSLSGTEA). Residues 34-148 (YDQNCYKAFE…DTQFRLQEPG (115 aa)) enclose the C-type lectin domain.

Belongs to the snaclec family. Heterodimer; disulfide-linked. In terms of processing, contains disulfide bonds. In terms of tissue distribution, expressed by the venom gland.

The protein resides in the secreted. In terms of biological role, interferes with one step of hemostasis (modulation of platelet aggregation, or coagulation cascade, for example). In Echis carinatus sochureki (Saw-scaled viper), this protein is Snaclec 8.